Here is a 167-residue protein sequence, read N- to C-terminus: MNDFTPKFRIGNGYDIHRLVTGRKLIIGGVNLKHPDNLGLDGHSDADVLTHSIMDALLGALSLGDIGKYFPPSDDKWKDVDSLILLSKVIDLVRKQGWEINNIDSVLVAERPKIKPFVEIMKKNLSNTLKIDNSFIGIKATTNEKLGPEGREEGISCHSVVLLEKKE.

The a divalent metal cation site is built by D15 and H17. 4-CDP-2-C-methyl-D-erythritol 2-phosphate is bound by residues 15 to 17 and 43 to 44; these read DIH and HS. H51 lines the a divalent metal cation pocket. Residues 65-67, 141-144, and R151 each bind 4-CDP-2-C-methyl-D-erythritol 2-phosphate; these read DIG and TTNE.

It belongs to the IspF family. In terms of assembly, homotrimer. It depends on a divalent metal cation as a cofactor.

The catalysed reaction is 4-CDP-2-C-methyl-D-erythritol 2-phosphate = 2-C-methyl-D-erythritol 2,4-cyclic diphosphate + CMP. Its pathway is isoprenoid biosynthesis; isopentenyl diphosphate biosynthesis via DXP pathway; isopentenyl diphosphate from 1-deoxy-D-xylulose 5-phosphate: step 4/6. Its function is as follows. Involved in the biosynthesis of isopentenyl diphosphate (IPP) and dimethylallyl diphosphate (DMAPP), two major building blocks of isoprenoid compounds. Catalyzes the conversion of 4-diphosphocytidyl-2-C-methyl-D-erythritol 2-phosphate (CDP-ME2P) to 2-C-methyl-D-erythritol 2,4-cyclodiphosphate (ME-CPP) with a corresponding release of cytidine 5-monophosphate (CMP). The polypeptide is 2-C-methyl-D-erythritol 2,4-cyclodiphosphate synthase (Prochlorococcus marinus (strain MIT 9312)).